The following is a 185-amino-acid chain: MISVNDFYPGLTIELDGEIYIVLEYQHVHMAQGQATVRVKLKNLKTGNVIRKTFKSDEYVPQAFINKREAEYLYKQGDEYYFIDNESFEQYVLTEEQLGEAINYLKEGNTVSVLFYEGNPIGIELPTTVVLEVVETDPGLRGDTVSGGSKPAKLETGLVIQVPLFIQIGDKVVVDTRYAKYVERA.

It belongs to the elongation factor P family.

The protein localises to the cytoplasm. It functions in the pathway protein biosynthesis; polypeptide chain elongation. Involved in peptide bond synthesis. Stimulates efficient translation and peptide-bond synthesis on native or reconstituted 70S ribosomes in vitro. Probably functions indirectly by altering the affinity of the ribosome for aminoacyl-tRNA, thus increasing their reactivity as acceptors for peptidyl transferase. In Dictyoglomus thermophilum (strain ATCC 35947 / DSM 3960 / H-6-12), this protein is Elongation factor P.